The sequence spans 344 residues: Inositol 2-dehydrogenase/D-chiro-inositol 3-dehydrogenase (344 aa).

The protein belongs to the Gfo/Idh/MocA family. As to quaternary structure, homotetramer.

It catalyses the reaction myo-inositol + NAD(+) = scyllo-inosose + NADH + H(+). It carries out the reaction 1D-chiro-inositol + NAD(+) = scyllo-inosine + NADH + H(+). Its pathway is polyol metabolism; myo-inositol degradation into acetyl-CoA; acetyl-CoA from myo-inositol: step 1/7. In terms of biological role, involved in the oxidation of myo-inositol (MI) and D-chiro-inositol (DCI) to 2-keto-myo-inositol (2KMI or 2-inosose) and 1-keto-D-chiro-inositol (1KDCI), respectively. Can also use D-glucose and D-xylose, and shows a trace of activity with D-ribose and D-fructose. The sequence is that of Inositol 2-dehydrogenase/D-chiro-inositol 3-dehydrogenase (iolG) from Bacillus subtilis (strain 168).